We begin with the raw amino-acid sequence, 643 residues long: Probable extracellular metalloproteinase 4 (643 aa).

Positions 1–18 are cleaved as a signal peptide; sequence MHGLLLAGLLALPLNVLA. The propeptide occupies 19–254; the sequence is HPTESHSSGV…VHSVVDYVSA (236 aa). A compositionally biased stretch (basic and acidic residues) spans 47 to 57; sequence TKSDAVPKQDG. Residues 47-69 are disordered; that stretch reads TKSDAVPKQDGESFTTSSTGDDN. A compositionally biased stretch (polar residues) spans 58–69; it reads ESFTTSSTGDDN. Asn-271 and Asn-420 each carry an N-linked (GlcNAc...) asparagine glycan. His-437 contributes to the Zn(2+) binding site. The active site involves Glu-438. Position 441 (His-441) interacts with Zn(2+). 2 N-linked (GlcNAc...) asparagine glycosylation sites follow: Asn-603 and Asn-629.

It belongs to the peptidase M36 family. The cofactor is Zn(2+).

It is found in the secreted. Functionally, secreted metalloproteinase probably acting as a virulence factor. This Arthroderma benhamiae (strain ATCC MYA-4681 / CBS 112371) (Trichophyton mentagrophytes) protein is Probable extracellular metalloproteinase 4 (MEP4).